Here is an 81-residue protein sequence, read N- to C-terminus: MTDLFSSPDHTLDAQGLRCPEPVMMVRKTVRNMQTGETLLIIADDPATTRDIPGFCTFMEHELMAKETDSLPYRYLLRKKH.

Cysteine 19 acts as the Cysteine persulfide intermediate in catalysis.

This sequence belongs to the sulfur carrier protein TusA family. As to quaternary structure, interacts with IscS.

Its subcellular location is the cytoplasm. It participates in tRNA modification. In terms of biological role, sulfur carrier protein involved in sulfur trafficking in the cell. Part of a sulfur-relay system required for 2-thiolation during synthesis of 2-thiouridine of the modified wobble base 5-methylaminomethyl-2-thiouridine (mnm(5)s(2)U) in tRNA. Interacts with IscS and stimulates its cysteine desulfurase activity. Accepts an activated sulfur from IscS, which is then transferred to TusD, and thus determines the direction of sulfur flow from IscS to 2-thiouridine formation. Also appears to be involved in sulfur transfer for the biosynthesis of molybdopterin. This chain is Sulfur carrier protein TusA, found in Citrobacter koseri (strain ATCC BAA-895 / CDC 4225-83 / SGSC4696).